We begin with the raw amino-acid sequence, 1148 residues long: Envelopment polyprotein (1148 aa).

An N-terminal signal peptide occupies residues 1 to 23 (MGELSPVCLYLLLQGLLLCNTGA). The Lumenal segment spans residues 24-495 (ARNLNELKME…VPGLHGWATM (472 aa)). 6 disulfide bridges follow: Cys34-Cys159, Cys68-Cys165, Cys117-Cys136, Cys141-Cys146, Cys183-Cys193, and Cys218-Cys257. N-linked (GlcNAc...) asparagine; by host glycosylation is present at Asn142. Residue Asn357 is glycosylated (N-linked (GlcNAc...) asparagine; by host). Disulfide bonds link Cys386/Cys445, Cys390/Cys399, Cys415/Cys434, and Cys462/Cys485. Asn409 carries N-linked (GlcNAc...) asparagine; by host glycosylation. Residues 496–516 (LLLLTFCFGWVLIPTITMILL) form a helical membrane-spanning segment. The Cytoplasmic portion of the chain corresponds to 517-637 (KILIAFAYLC…LSLFRYRSRF (121 aa)). Positions 526–543 (CSKYNTDSKFRILIEKVK) are binding to the ribonucleoprotein. 2 consecutive CCHC-type zinc fingers follow at residues 555–575 (CEVCQYECETAKELESHRKSC) and 580–601 (CPYCLNPSEATTSALQAHFKVC). Binding to the ribonucleoprotein stretches follow at residues 598–615 (FKVCKLRSRFQENLRKSL), 602–613 (KLRSRFQENLRK), and 621–635 (MQGCYRTLSLFRYRS). Residues 621–644 (MQGCYRTLSLFRYRSRFFVGLVWC) enclose the ITAM domain. Positions 625–628 (YRTL) match the YxxL motif. A helical membrane pass occupies residues 638 to 658 (FVGLVWCVLLVHHLIVWAASA). Over 659-1114 (ETQNLNAGWT…EWILGVLNGN (456 aa)) the chain is Lumenal. Cystine bridges form between Cys745/Cys780, Cys749/Cys787, Cys761/Cys894, Cys775/Cys905, Cys790/Cys913, Cys816/Cys825, Cys833/Cys842, and Cys873/Cys877. The interval 767-787 (YEYETGWGCNPPDCPGVGTGC) is fusion loop. Residue Asn937 is glycosylated (N-linked (GlcNAc...) asparagine; by host). 5 disulfide bridges follow: Cys979–Cys1009, Cys1002–Cys1054, Cys1019–Cys1024, Cys1055–Cys1060, and Cys1094–Cys1098. The helical transmembrane segment at 1115–1135 (WMVVAVLVVLLILSILLFTLC) threads the bilayer. 2 binding to the ribonucleoprotein regions span residues 1131-1143 (LFTLCCPRRPSYR) and 1131-1148 (LFTLCCPRRPSYRKEHKP). Residues 1136–1148 (CPRRPSYRKEHKP) are Cytoplasmic-facing.

The protein belongs to the hantavirus envelope glycoprotein family. Homodimer. Homotetramer; forms heterotetrameric Gn-Gc spikes in the pre-fusion conformation. Interacts (via C-terminus) with the nucleoprotein. Interacts with host TUFM; this interaction contributes to the virus-induced degradation of mitochondria by autophagy, which leads to degradation of host MAVS and inhibition of type I interferon (IFN) responses. Interacts with host MAP1LC3B; this interaction contributes to the virus-induced degradation of mitochondria by autophagy, which leads to degradation of host MAVS and inhibition of type I interferon (IFN) responses. In terms of assembly, homodimer. Homotetramer; forms heterotetrameric Gn-Gc spikes in the pre-fusion conformation. Homotrimer; forms homotrimer in the post-fusion conformation at acidic pH. Interacts (via C-terminus) with the nucleoprotein. Post-translationally, envelope polyprotein precursor is quickly cleaved in vivo just after synthesis, presumably by host signal peptidase.

It is found in the virion membrane. The protein resides in the host cell surface. It localises to the host Golgi apparatus membrane. Its subcellular location is the host endoplasmic reticulum membrane. The protein localises to the host mitochondrion. Functionally, forms homotetramers with glycoprotein C at the surface of the virion. Attaches the virion to host cell receptors including integrin ITGAV/ITGB3. This attachment induces virion internalization predominantly through clathrin-dependent endocytosis. Mediates the assembly and budding of infectious virus particles through its interaction with the nucleocapsid protein and the viral genome. May dysregulate normal immune and endothelial cell responses through an ITAM motif. Translocates to mitochondria, binds to host TUFM and recruits MAP1LC3B. These interactions induce mitochondrial autophagy and therefore destruction of host MAVS leading to inhibition of type I interferon (IFN) responses. Concomitant breakdown of glycoprotein N is apparently prevented by the nucleoprotein that may inhibit Gn-stimulated autophagosome-lysosome fusion. Interacts with the viral genomic RNA. Forms homotetramers with glycoprotein N at the surface of the virion. Attaches the virion to host cell receptors including integrin ITGAV/ITGB3. This attachment induces virion internalization predominantly through clathrin-dependent endocytosis. Class II fusion protein that promotes fusion of viral membrane with host endosomal membrane after endocytosis of the virion. This Homo sapiens (Human) protein is Envelopment polyprotein (GP).